We begin with the raw amino-acid sequence, 175 residues long: MPTILILNGPNLNLLGLREPHIYGSTTLQDVENICIELGKQHNVTVDAFQSNHEGQLIDRIHEARNKVDLIVINPAAYTHTSVAIRDALLGVSIPFIEVHISNVHAREQWRHHSYFSDKAVACIVGLGTFGYEAAIQHATLKQFKDLTFRYKRGDYGEVIYYYESLPNPILVVVL.

Catalysis depends on tyrosine 23, which acts as the Proton acceptor. 3 residues coordinate substrate: asparagine 74, histidine 80, and aspartate 87. Residue histidine 100 is the Proton donor of the active site. Substrate-binding positions include 101 to 102 (IS) and arginine 111.

It belongs to the type-II 3-dehydroquinase family. As to quaternary structure, homododecamer. Adopts a ring-like structure, composed of an arrangement of two hexameric rings stacked on top of one another.

It carries out the reaction 3-dehydroquinate = 3-dehydroshikimate + H2O. It participates in aromatic compound metabolism; 3,4-dihydroxybenzoate biosynthesis; 3,4-dihydroxybenzoate from 3-dehydroquinate: step 1/2. Functionally, is involved in the catabolism of quinate. Allows the utilization of quinate as carbon source via the beta-ketoadipate pathway. This Talaromyces marneffei (strain ATCC 18224 / CBS 334.59 / QM 7333) (Penicillium marneffei) protein is Catabolic 3-dehydroquinase.